A 173-amino-acid chain; its full sequence is Photosystem I assembly protein Ycf3 (173 aa).

TPR repeat units lie at residues 35-68, 72-105, and 120-153; these read AYIY…EENK, GETL…NPKQ, and GRFA…YPGG.

It belongs to the Ycf3 family.

Its subcellular location is the cellular thylakoid membrane. Functionally, essential for the assembly of the photosystem I (PSI) complex. May act as a chaperone-like factor to guide the assembly of the PSI subunits. This is Photosystem I assembly protein Ycf3 from Prochlorococcus marinus subsp. pastoris (strain CCMP1986 / NIES-2087 / MED4).